We begin with the raw amino-acid sequence, 391 residues long: Mannonate dehydratase (391 aa).

The segment at E334–L359 is disordered.

It belongs to the mannonate dehydratase family. The cofactor is Fe(2+). Requires Mn(2+) as cofactor.

The catalysed reaction is D-mannonate = 2-dehydro-3-deoxy-D-gluconate + H2O. It functions in the pathway carbohydrate metabolism; pentose and glucuronate interconversion. Its function is as follows. Catalyzes the dehydration of D-mannonate. The chain is Mannonate dehydratase from Chromohalobacter salexigens (strain ATCC BAA-138 / DSM 3043 / CIP 106854 / NCIMB 13768 / 1H11).